The chain runs to 411 residues: Flavohemoprotein (411 aa).

One can recognise a Globin domain in the interval Thr5 to Lys142. Residue His89 coordinates heme b. Catalysis depends on charge relay system residues Tyr99 and Glu141. The interval Gly153 to Ser411 is reductase. In terms of domain architecture, FAD-binding FR-type spans Arg156–Gln267. Residues Tyr194 and Arg210–Ser213 each bind FAD. Gly280–Pro285 lines the NADP(+) pocket. Residue Phe401–Pro404 participates in FAD binding.

It belongs to the globin family. Two-domain flavohemoproteins subfamily. The protein in the C-terminal section; belongs to the flavoprotein pyridine nucleotide cytochrome reductase family. Requires heme b as cofactor. FAD serves as cofactor.

The catalysed reaction is 2 nitric oxide + NADPH + 2 O2 = 2 nitrate + NADP(+) + H(+). The enzyme catalyses 2 nitric oxide + NADH + 2 O2 = 2 nitrate + NAD(+) + H(+). In terms of biological role, is involved in NO detoxification in an aerobic process, termed nitric oxide dioxygenase (NOD) reaction that utilizes O(2) and NAD(P)H to convert NO to nitrate, which protects the bacterium from various noxious nitrogen compounds. Therefore, plays a central role in the inducible response to nitrosative stress. The sequence is that of Flavohemoprotein from Halalkalibacterium halodurans (strain ATCC BAA-125 / DSM 18197 / FERM 7344 / JCM 9153 / C-125) (Bacillus halodurans).